Reading from the N-terminus, the 355-residue chain is tRNA (guanine-N(1)-)-methyltransferase (355 aa).

Residues Gly109 and 129-134 contribute to the S-adenosyl-L-methionine site; that span reads IGDYVL.

This sequence belongs to the RNA methyltransferase TrmD family. Homodimer.

The protein localises to the cytoplasm. It catalyses the reaction guanosine(37) in tRNA + S-adenosyl-L-methionine = N(1)-methylguanosine(37) in tRNA + S-adenosyl-L-homocysteine + H(+). Its function is as follows. Specifically methylates guanosine-37 in various tRNAs. The chain is tRNA (guanine-N(1)-)-methyltransferase from Chlamydia abortus (strain DSM 27085 / S26/3) (Chlamydophila abortus).